A 449-amino-acid chain; its full sequence is 3-phosphoshikimate 1-carboxyvinyltransferase (449 aa).

A disordered region spans residues 1 to 23 (MSHSASPKPATARRSEALTGEIR). Residues Lys-28, Ser-29, and Arg-33 each coordinate 3-phosphoshikimate. Position 28 (Lys-28) interacts with phosphoenolpyruvate. Phosphoenolpyruvate-binding residues include Gly-100 and Arg-128. Positions 173, 175, 326, and 353 each coordinate 3-phosphoshikimate. Residue Gln-175 participates in phosphoenolpyruvate binding. Asp-326 serves as the catalytic Proton acceptor. Phosphoenolpyruvate contacts are provided by Arg-357 and Arg-402.

It belongs to the EPSP synthase family. As to quaternary structure, monomer.

It localises to the cytoplasm. The enzyme catalyses 3-phosphoshikimate + phosphoenolpyruvate = 5-O-(1-carboxyvinyl)-3-phosphoshikimate + phosphate. The protein operates within metabolic intermediate biosynthesis; chorismate biosynthesis; chorismate from D-erythrose 4-phosphate and phosphoenolpyruvate: step 6/7. Functionally, catalyzes the transfer of the enolpyruvyl moiety of phosphoenolpyruvate (PEP) to the 5-hydroxyl of shikimate-3-phosphate (S3P) to produce enolpyruvyl shikimate-3-phosphate and inorganic phosphate. This is 3-phosphoshikimate 1-carboxyvinyltransferase from Pseudomonas sp. (strain PG2982).